A 55-amino-acid polypeptide reads, in one-letter code: Large ribosomal subunit protein bL33 (55 aa).

The protein belongs to the bacterial ribosomal protein bL33 family.

This is Large ribosomal subunit protein bL33 from Rhizobium etli (strain CIAT 652).